The chain runs to 337 residues: Ketol-acid reductoisomerase (NADP(+)) (337 aa).

Residues 1-181 (MKIYYEHDAD…GAARAGVIAT (181 aa)) form the KARI N-terminal Rossmann domain. Residues 24–27 (FGSQ), Arg-47, Ser-50, Ser-52, and 82–85 (DEKQ) contribute to the NADP(+) site. The active site involves His-107. Gly-133 is a binding site for NADP(+). Positions 182–328 (TFKDETETDL…SRLRAMMPFL (147 aa)) constitute a KARI C-terminal knotted domain. The Mg(2+) site is built by Asp-190, Glu-194, Glu-226, and Glu-230. Residue Ser-251 coordinates substrate.

The protein belongs to the ketol-acid reductoisomerase family. The cofactor is Mg(2+).

It catalyses the reaction (2R)-2,3-dihydroxy-3-methylbutanoate + NADP(+) = (2S)-2-acetolactate + NADPH + H(+). The enzyme catalyses (2R,3R)-2,3-dihydroxy-3-methylpentanoate + NADP(+) = (S)-2-ethyl-2-hydroxy-3-oxobutanoate + NADPH + H(+). The protein operates within amino-acid biosynthesis; L-isoleucine biosynthesis; L-isoleucine from 2-oxobutanoate: step 2/4. Its pathway is amino-acid biosynthesis; L-valine biosynthesis; L-valine from pyruvate: step 2/4. Its function is as follows. Involved in the biosynthesis of branched-chain amino acids (BCAA). Catalyzes an alkyl-migration followed by a ketol-acid reduction of (S)-2-acetolactate (S2AL) to yield (R)-2,3-dihydroxy-isovalerate. In the isomerase reaction, S2AL is rearranged via a Mg-dependent methyl migration to produce 3-hydroxy-3-methyl-2-ketobutyrate (HMKB). In the reductase reaction, this 2-ketoacid undergoes a metal-dependent reduction by NADPH to yield (R)-2,3-dihydroxy-isovalerate. This chain is Ketol-acid reductoisomerase (NADP(+)), found in Thermus thermophilus (strain ATCC BAA-163 / DSM 7039 / HB27).